We begin with the raw amino-acid sequence, 122 residues long: Large ribosomal subunit protein uL18 (122 aa).

Residues 1–16 show a composition bias toward basic residues; that stretch reads MFKKVDRKASRQKKQM. A disordered region spans residues 1–29; the sequence is MFKKVDRKASRQKKQMSIRNKISGTPERP.

This sequence belongs to the universal ribosomal protein uL18 family. In terms of assembly, part of the 50S ribosomal subunit; part of the 5S rRNA/L5/L18/L25 subcomplex. Contacts the 5S and 23S rRNAs.

This is one of the proteins that bind and probably mediate the attachment of the 5S RNA into the large ribosomal subunit, where it forms part of the central protuberance. This Fusobacterium nucleatum subsp. nucleatum (strain ATCC 25586 / DSM 15643 / BCRC 10681 / CIP 101130 / JCM 8532 / KCTC 2640 / LMG 13131 / VPI 4355) protein is Large ribosomal subunit protein uL18.